Reading from the N-terminus, the 133-residue chain is Fatty acid-binding protein, heart (133 aa).

Residue Ala2 is modified to N-acetylalanine. Thr8 carries the post-translational modification Phosphothreonine. Tyr20 carries the post-translational modification Phosphotyrosine; by Tyr-kinases. Ser23 carries the phosphoserine modification. At Thr30 the chain carries Phosphothreonine. The residue at position 83 (Ser83) is a Phosphoserine. 127-129 (RTY) provides a ligand contact to (9Z)-octadecenoate. 127 to 129 (RTY) contacts hexadecanoate. Residue 127–129 (RTY) participates in octadecanoate binding.

This sequence belongs to the calycin superfamily. Fatty-acid binding protein (FABP) family.

The protein localises to the cytoplasm. Functionally, FABPs are thought to play a role in the intracellular transport of long-chain fatty acids and their acyl-CoA esters. The polypeptide is Fatty acid-binding protein, heart (Fabp3) (Mus musculus (Mouse)).